The sequence spans 294 residues: tRNA pseudouridine synthase B (294 aa).

D39 functions as the Nucleophile in the catalytic mechanism.

It belongs to the pseudouridine synthase TruB family. Type 1 subfamily.

The catalysed reaction is uridine(55) in tRNA = pseudouridine(55) in tRNA. Functionally, responsible for synthesis of pseudouridine from uracil-55 in the psi GC loop of transfer RNAs. The protein is tRNA pseudouridine synthase B of Streptococcus pyogenes serotype M6 (strain ATCC BAA-946 / MGAS10394).